Here is a 273-residue protein sequence, read N- to C-terminus: NH(3)-dependent NAD(+) synthetase (273 aa).

Residue 47–54 (GISGGQDS) coordinates ATP. Aspartate 53 is a Mg(2+) binding site. Arginine 139 lines the deamido-NAD(+) pocket. Threonine 159 serves as a coordination point for ATP. Glutamate 164 provides a ligand contact to Mg(2+). Deamido-NAD(+) contacts are provided by lysine 172 and aspartate 179. ATP-binding residues include lysine 188 and threonine 210. 259-260 (HK) lines the deamido-NAD(+) pocket.

It belongs to the NAD synthetase family. In terms of assembly, homodimer.

It catalyses the reaction deamido-NAD(+) + NH4(+) + ATP = AMP + diphosphate + NAD(+) + H(+). Its pathway is cofactor biosynthesis; NAD(+) biosynthesis; NAD(+) from deamido-NAD(+) (ammonia route): step 1/1. Functionally, catalyzes the ATP-dependent amidation of deamido-NAD to form NAD. Uses ammonia as a nitrogen source. This is NH(3)-dependent NAD(+) synthetase from Staphylococcus aureus (strain COL).